A 487-amino-acid polypeptide reads, in one-letter code: MGSTDLNSKPHIVLLSSPGLGHLIPVLELGKRIVTLCNFDVTIFMVGSDTSAAEPQVLRSAMTPKLCEIIQLPPPNISCLIDPEATVCTRLFVLMREIRPAFRAAVSALKFRPAAIIVDLFGTESLEVAKELGIAKYVYIASNAWFLALTIYVPILDKEVEGEFVLQKEPMKIPGCRPVRTEEVVDPMLDRTNQQYSEYFRLGIEIPTADGILMNTWEALEPTTFGALRDVKFLGRVAKVPVFPIGPLRRQAGPCGSNCELLDWLDQQPKESVVYVSFGSGGTLSLEQMIELAWGLERSQQRFIWVVRQPTVKTGDAAFFTQGDGADDMSGYFPEGFLTRIQNVGLVVPQWSPQIHIMSHPSVGVFLSHCGWNSVLESITAGVPIIAWPIYAEQRMNATLLTEELGVAVRPKNLPAKEVVKREEIERMIRRIMVDEEGSEIRKRVRELKDSGEKALNEGGSSFNYMSALGNEWEKSWKTQRSERSLW.

Catalysis depends on H22, which acts as the Proton acceptor. H22 is an an anthocyanidin binding site. Residue D119 is the Charge relay of the active site. Q354, H369, W372, N373, S374, and E377 together coordinate UDP-alpha-D-glucose. A392 is an an anthocyanidin binding site. UDP-alpha-D-glucose contacts are provided by E393 and Q394.

The protein belongs to the UDP-glycosyltransferase family. As to expression, faintly expressed in cotyledons.

The enzyme catalyses an anthocyanidin + UDP-alpha-D-glucose + H(+) = an anthocyanidin 3-O-beta-D-glucoside + UDP. The protein operates within pigment biosynthesis; anthocyanin biosynthesis. In terms of biological role, in the presence of other necessary color factors, this glycosylation reaction allows the accumulation of anthocyanin pigments. The polypeptide is Anthocyanidin 3-O-glucosyltransferase 5 (GT5) (Manihot esculenta (Cassava)).